Here is a 98-residue protein sequence, read N- to C-terminus: Large ribosomal subunit protein uL23 (98 aa).

Belongs to the universal ribosomal protein uL23 family. In terms of assembly, part of the 50S ribosomal subunit. Contacts protein L29, and trigger factor when it is bound to the ribosome.

In terms of biological role, one of the early assembly proteins it binds 23S rRNA. One of the proteins that surrounds the polypeptide exit tunnel on the outside of the ribosome. Forms the main docking site for trigger factor binding to the ribosome. The sequence is that of Large ribosomal subunit protein uL23 from Rickettsia africae (strain ESF-5).